A 187-amino-acid chain; its full sequence is Oligoribonuclease (187 aa).

Positions Leu7–Met170 constitute an Exonuclease domain. Residue Tyr128 is part of the active site.

It belongs to the oligoribonuclease family.

The protein resides in the cytoplasm. Functionally, 3'-to-5' exoribonuclease specific for small oligoribonucleotides. The chain is Oligoribonuclease from Neisseria meningitidis serogroup B (strain ATCC BAA-335 / MC58).